The following is a 967-amino-acid chain: Vacuolar membrane protease (967 aa).

The Cytoplasmic segment spans residues 1–16; that stretch reads MARPSLSRSNPLGFTP. A helical transmembrane segment spans residues 17–37; that stretch reads WPVTVITAVVYLALVVPLLVV. Over 38 to 387 the chain is Vacuolar; that stretch reads HHVVPSAPSS…SAFVVFELHT (350 aa). Residues N53 and N119 are each glycosylated (N-linked (GlcNAc...) asparagine). Residues H171 and D183 each contribute to the Zn(2+) site. E217 serves as the catalytic Proton acceptor. Residues E218, E243, and H316 each coordinate Zn(2+). Residues 388–408 form a helical membrane-spanning segment; it reads LFALSVTLLVVAPLVLLVTSI. At 409-441 the chain is on the cytoplasmic side; that stretch reads ALNRADKMYLFRASASPEDSDGSEAVLLHGVRG. Residues 442 to 462 traverse the membrane as a helical segment; the sequence is FFRFPFLLVIPTAVTVGLAYL. At 463–472 the chain is on the vacuolar side; sequence VTKFNPYIIH. The helical transmembrane segment at 473–493 threads the bilayer; it reads SSEYAVWSMMISAWVFLAWFV. The Cytoplasmic segment spans residues 494 to 507; it reads SRVADFARPSAFHR. Residues 508–528 traverse the membrane as a helical segment; sequence VYTLTWLFLVEWVLLVISTVY. The Vacuolar portion of the chain corresponds to 529–532; the sequence is ENKY. Residues 533 to 553 traverse the membrane as a helical segment; it reads GLAGGYFVFFAFAGTFLATWI. Residues 554 to 663 lie on the Cytoplasmic side of the membrane; it reads SYLELFALPR…WSIHLPKWVW (110 aa). The disordered stretch occupies residues 579-612; that stretch reads SSHGSRLGTASGEDVEDGEDEDEDDDGTTAEATE. Acidic residues predominate over residues 591-606; it reads EDVEDGEDEDEDDDGT. Residues 664-684 traverse the membrane as a helical segment; it reads VLQFLLTAPLVLTFVGPLALL. Residues 685–700 lie on the Vacuolar side of the membrane; it reads LTSALRQTGQDGSSSL. A helical transmembrane segment spans residues 701–721; it reads FIYIAVAALTTLLFIPLLPFI. Residues 722–727 lie on the Cytoplasmic side of the membrane; the sequence is HRYTHH. The helical transmembrane segment at 728–748 threads the bilayer; it reads IPLFLLCVFAGTLIYNLVAFP. Topologically, residues 749–967 are vacuolar; the sequence is FSPANRLKLF…LVEGSRRFEI (219 aa). N-linked (GlcNAc...) asparagine glycans are attached at residues N795 and N832.

Belongs to the peptidase M28 family. Zn(2+) serves as cofactor.

The protein resides in the vacuole membrane. In terms of biological role, may be involved in vacuolar sorting and osmoregulation. In Neosartorya fischeri (strain ATCC 1020 / DSM 3700 / CBS 544.65 / FGSC A1164 / JCM 1740 / NRRL 181 / WB 181) (Aspergillus fischerianus), this protein is Vacuolar membrane protease.